An 89-amino-acid chain; its full sequence is Small ribosomal subunit protein uS15 (89 aa).

A compositionally biased stretch (basic and acidic residues) spans 1–18 (MSLDTAEKQKLIENHQVH). A disordered region spans residues 1–23 (MSLDTAEKQKLIENHQVHPTDTG).

It belongs to the universal ribosomal protein uS15 family. Part of the 30S ribosomal subunit. Forms a bridge to the 50S subunit in the 70S ribosome, contacting the 23S rRNA.

Functionally, one of the primary rRNA binding proteins, it binds directly to 16S rRNA where it helps nucleate assembly of the platform of the 30S subunit by binding and bridging several RNA helices of the 16S rRNA. Forms an intersubunit bridge (bridge B4) with the 23S rRNA of the 50S subunit in the ribosome. This is Small ribosomal subunit protein uS15 from Prochlorococcus marinus (strain MIT 9301).